The following is an 80-amino-acid chain: MSCCGGKCGCGAGCKCGSGCNGCGNYADITEQSSASETLVMGVVGTQKLNYGQAEAGVATEGSCSGCKCVYCTCDPCTCK.

It belongs to the metallothionein superfamily. Type 15 family.

Functionally, metallothioneins have a high content of cysteine residues that bind various heavy metals. This is Metallothionein-like protein type 2 MET1 (MET1) from Fragaria ananassa (Strawberry).